A 193-amino-acid chain; its full sequence is MSDDDSRASTSSSSSSSSNQQTEKETNTPKKKESKVSMSKNSKLLSTSAKRIQKELADITLDPPPNCSAGPKGDNIYEWRSTILGPPGSVYEGGVFFLDITFTPEYPFKPPKVTFRTRIYHCNINSQGVICLDILKDNWSPALTISKVLLSICSLLTDCNPADPLVGSIATQYMTNRAEHDRMARQWTKRYAT.

The interval 1–45 (MSDDDSRASTSSSSSSSSNQQTEKETNTPKKKESKVSMSKNSKLL) is disordered. At serine 2 the chain carries N-acetylserine. Low complexity predominate over residues 8-18 (ASTSSSSSSSS). The span at 22 to 35 (TEKETNTPKKKESK) shows a compositional bias: basic and acidic residues. Residues 36-45 (VSMSKNSKLL) show a composition bias toward polar residues. The UBC core domain occupies 47-193 (TSAKRIQKEL…ARQWTKRYAT (147 aa)). Cysteine 131 functions as the Glycyl thioester intermediate in the catalytic mechanism. A Glycyl lysine isopeptide (Lys-Gly) (interchain with G-Cter in ISG15) cross-link involves residue lysine 136.

This sequence belongs to the ubiquitin-conjugating enzyme family. In terms of assembly, interacts with RNF14. In terms of processing, ISGylation suppresses ubiquitin E2 enzyme activity. Autoubiquitinated in vitro.

It is found in the nucleus. It carries out the reaction S-ubiquitinyl-[E1 ubiquitin-activating enzyme]-L-cysteine + [E2 ubiquitin-conjugating enzyme]-L-cysteine = [E1 ubiquitin-activating enzyme]-L-cysteine + S-ubiquitinyl-[E2 ubiquitin-conjugating enzyme]-L-cysteine.. The enzyme catalyses S-ubiquitinyl-[E1 ubiquitin-activating enzyme]-L-cysteine + [acceptor protein]-L-lysine = [E1 ubiquitin-activating enzyme]-L-cysteine + N(6)-monoubiquitinyl-[acceptor protein]-L-lysine.. It participates in protein modification; protein ubiquitination. Functionally, accepts ubiquitin from the E1 complex and catalyzes its covalent attachment to other proteins. Catalyzes the covalent attachment of ISG15 to other proteins. Mediates the selective degradation of short-lived and abnormal proteins. In vitro also catalyzes 'Lys-48'-linked polyubiquitination. Catalyzes monoubiquitination of other proteins in both an E3-dependent and E3-independent manner. This is Ubiquitin-conjugating enzyme E2 E1 from Homo sapiens (Human).